Reading from the N-terminus, the 1059-residue chain is Isoleucine--tRNA ligase (1059 aa).

The short motif at 59–69 (PFANGLPHYGH) is the 'HIGH' region element. Positions 637–641 (KMSKS) match the 'KMSKS' region motif. K640 is a binding site for ATP.

This sequence belongs to the class-I aminoacyl-tRNA synthetase family. IleS type 2 subfamily. As to quaternary structure, monomer. The cofactor is Zn(2+).

It localises to the cytoplasm. The catalysed reaction is tRNA(Ile) + L-isoleucine + ATP = L-isoleucyl-tRNA(Ile) + AMP + diphosphate. Catalyzes the attachment of isoleucine to tRNA(Ile). As IleRS can inadvertently accommodate and process structurally similar amino acids such as valine, to avoid such errors it has two additional distinct tRNA(Ile)-dependent editing activities. One activity is designated as 'pretransfer' editing and involves the hydrolysis of activated Val-AMP. The other activity is designated 'posttransfer' editing and involves deacylation of mischarged Val-tRNA(Ile). The chain is Isoleucine--tRNA ligase from Mycobacterium leprae (strain TN).